A 426-amino-acid polypeptide reads, in one-letter code: MSKSENLYSAARELIPGGVNSPVRAFTGVGGTPLFIEKADGAYLYDVDGKAYIDYVGSWGPMVLGHNHPAIRNAVIEAAERGLSFGAPTEMEVKMAQLVTELVPTMDMVRMVNSGTEATMSAIRLARGFTGRDKIIKFEGCYHGHADCLLVKAGSGALTLGQPNSPGVPADFAKHTLTCTYNDLASVRAAFEQYPQEIACIIVEPVAGNMNCVPPLPEFLPGLRALCDEFGALLIIDEVMTGFRVALAGAQDYYGVEPDLTCLGKIIGGGMPVGAFGGRRDVMDALAPTGPVYQAGTLSGNPIAMAAGFACLNEVAQPGVHETLDELTSRLAEGLLEAAEEAGIPLVVNHVGGMFGIFFTDAESVTCYQDVMACDVERFKRFFHMMLDEGVYLAPSAFEAGFMSVAHSMEDINNTIDAARRVFAKL.

Lys-265 carries the post-translational modification N6-(pyridoxal phosphate)lysine.

Belongs to the class-III pyridoxal-phosphate-dependent aminotransferase family. HemL subfamily. As to quaternary structure, homodimer. Requires pyridoxal 5'-phosphate as cofactor.

The protein localises to the cytoplasm. The catalysed reaction is (S)-4-amino-5-oxopentanoate = 5-aminolevulinate. It participates in porphyrin-containing compound metabolism; protoporphyrin-IX biosynthesis; 5-aminolevulinate from L-glutamyl-tRNA(Glu): step 2/2. The polypeptide is Glutamate-1-semialdehyde 2,1-aminomutase (Escherichia coli O139:H28 (strain E24377A / ETEC)).